We begin with the raw amino-acid sequence, 160 residues long: Phosphopantetheine adenylyltransferase (160 aa).

Position 10 (Thr10) interacts with substrate. ATP-binding positions include 10-11 (TF) and His18. 3 residues coordinate substrate: Lys42, Met74, and Arg88. ATP contacts are provided by residues 89–91 (GLR), Glu99, and 124–130 (LSFLSSS).

The protein belongs to the bacterial CoaD family. Homohexamer. Requires Mg(2+) as cofactor.

The protein localises to the cytoplasm. It catalyses the reaction (R)-4'-phosphopantetheine + ATP + H(+) = 3'-dephospho-CoA + diphosphate. It participates in cofactor biosynthesis; coenzyme A biosynthesis; CoA from (R)-pantothenate: step 4/5. Functionally, reversibly transfers an adenylyl group from ATP to 4'-phosphopantetheine, yielding dephospho-CoA (dPCoA) and pyrophosphate. This is Phosphopantetheine adenylyltransferase from Photorhabdus laumondii subsp. laumondii (strain DSM 15139 / CIP 105565 / TT01) (Photorhabdus luminescens subsp. laumondii).